The sequence spans 120 residues: MTIPQLDGLQIEVQQEGQGTRETRRGDNVDVHYKGVLTSGKKFDASYDRGEPLNFTVGQGQVIKGWDEGLLGMKIGEKRKLTIAPHLAYGNRAVGGIIPANSTLIFETELVGIKGVQKGE.

The PPIase FKBP-type domain occupies glycine 26 to lysine 114.

The protein belongs to the FKBP-type PPIase family. FKBP1 subfamily.

The protein localises to the cytoplasm. It catalyses the reaction [protein]-peptidylproline (omega=180) = [protein]-peptidylproline (omega=0). PPIases accelerate the folding of proteins. It catalyzes the cis-trans isomerization of proline imidic peptide bonds in oligopeptides. The sequence is that of FK506-binding protein 1A (fkr-2) from Neurospora crassa (strain ATCC 24698 / 74-OR23-1A / CBS 708.71 / DSM 1257 / FGSC 987).